The following is an 834-amino-acid chain: Probable receptor-like protein kinase At2g23200 (834 aa).

Residues 1–28 form the signal peptide; that stretch reads MENFCFQDSVSLFITIMVLVLLPRLSLS. Residues 29–405 lie on the Extracellular side of the membrane; sequence DTSTYTRPEN…SSSRVHIITG (377 aa). 10 N-linked (GlcNAc...) asparagine glycosylation sites follow: asparagine 61, asparagine 149, asparagine 221, asparagine 246, asparagine 277, asparagine 289, asparagine 314, asparagine 352, asparagine 361, and asparagine 394. The chain crosses the membrane as a helical span at residues 406-426; sequence CAVAAAAASALVFSLLFMVFL. The Cytoplasmic segment spans residues 427–834; it reads KRRRSKKTKP…FSQLKISDAR (408 aa). The region spanning 488-761 is the Protein kinase domain; that stretch reads FDEQLLIGKG…RDVIWDLEYV (274 aa). ATP contacts are provided by residues 494–502 and lysine 516; that span reads IGKGGFGYV. Catalysis depends on aspartate 613, which acts as the Proton acceptor.

The protein belongs to the protein kinase superfamily. Ser/Thr protein kinase family.

The protein resides in the membrane. The polypeptide is Probable receptor-like protein kinase At2g23200 (Arabidopsis thaliana (Mouse-ear cress)).